Here is a 258-residue protein sequence, read N- to C-terminus: Regulatory protein RecX (258 aa).

It belongs to the RecX family.

It localises to the cytoplasm. Modulates RecA activity. The polypeptide is Regulatory protein RecX (Streptococcus pyogenes serotype M12 (strain MGAS2096)).